We begin with the raw amino-acid sequence, 238 residues long: Probable transcriptional regulatory protein VS_II1504 (238 aa).

Belongs to the TACO1 family.

The protein resides in the cytoplasm. This Vibrio atlanticus (strain LGP32) (Vibrio splendidus (strain Mel32)) protein is Probable transcriptional regulatory protein VS_II1504.